We begin with the raw amino-acid sequence, 175 residues long: Peptide deformylase (175 aa).

Residues Cys96 and His138 each contribute to the Fe cation site. The active site involves Glu139. His142 is a Fe cation binding site.

It belongs to the polypeptide deformylase family. Fe(2+) serves as cofactor.

The catalysed reaction is N-terminal N-formyl-L-methionyl-[peptide] + H2O = N-terminal L-methionyl-[peptide] + formate. Its function is as follows. Removes the formyl group from the N-terminal Met of newly synthesized proteins. Requires at least a dipeptide for an efficient rate of reaction. N-terminal L-methionine is a prerequisite for activity but the enzyme has broad specificity at other positions. This chain is Peptide deformylase, found in Rhodopseudomonas palustris (strain BisB5).